A 327-amino-acid chain; its full sequence is Malate dehydrogenase (327 aa).

12 to 18 (GAAGQIC) contacts NAD(+). Substrate contacts are provided by arginine 92 and arginine 98. Residues asparagine 105, glutamine 112, and 129–131 (TGN) each bind NAD(+). Substrate is bound by residues asparagine 131 and arginine 162. Histidine 187 serves as the catalytic Proton acceptor.

It belongs to the LDH/MDH superfamily. MDH type 2 family.

The enzyme catalyses (S)-malate + NAD(+) = oxaloacetate + NADH + H(+). Catalyzes the reversible oxidation of malate to oxaloacetate. This is Malate dehydrogenase from Cutibacterium acnes (strain DSM 16379 / KPA171202) (Propionibacterium acnes).